Here is a 384-residue protein sequence, read N- to C-terminus: MKMGPLGAEADENQTVEEMKVDQFGPGHTTLPGELAPDSEPELIDSTKLIEVQVVLILAYCSIILLGVIGNSLVIHVVIKFKSMRTVTNFFIANLAVADLLVNTLCLPFTLTYTLMGEWKMGPVLCHLVPYAQGLAVQVSTITLTVIALDRHRCIVYHLESKISKQISFLIIGLAWGVSALLASPLAIFREYSLIEIIPDFEIVACTEKWPGEEKGIYGTIYSLSSLLILYVLPLGIISFSYTRIWSKLKNHVSPGAAHDHYHQRRQKTTKMLVCVVVVFAVSWLPLHAFQLAVDIDSHVLDLKEYKLIFTVFHIIAMCSTFANPLLYGWMNSNYRKAFLSAFRCEQRLDAIHSEVSVTFKAKKHLQVTKNNGPNDSFTETTNV.

The Extracellular segment spans residues methionine 1–valine 54. N-linked (GlcNAc...) asparagine glycosylation is present at asparagine 13. Residues valine 55–isoleucine 75 form a helical membrane-spanning segment. The Cytoplasmic segment spans residues histidine 76–asparagine 89. A helical membrane pass occupies residues phenylalanine 90–threonine 110. Residues leucine 111–histidine 127 are Extracellular-facing. A disulfide bridge links cysteine 126 with cysteine 206. Residues leucine 128 to alanine 148 form a helical membrane-spanning segment. The Cytoplasmic segment spans residues leucine 149–serine 168. Residues phenylalanine 169–phenylalanine 189 traverse the membrane as a helical segment. At arginine 190–glycine 219 the chain is on the extracellular side. Residues threonine 220–phenylalanine 240 traverse the membrane as a helical segment. Residues serine 241 to lysine 271 are Cytoplasmic-facing. Residues methionine 272–leucine 292 traverse the membrane as a helical segment. At alanine 293–lysine 307 the chain is on the extracellular side. The chain crosses the membrane as a helical span at residues leucine 308–tyrosine 328. Residues glycine 329 to valine 384 are Cytoplasmic-facing. A lipid anchor (S-palmitoyl cysteine) is attached at cysteine 345.

The protein belongs to the G-protein coupled receptor 1 family.

It localises to the cell membrane. Receptor for neuropeptide Y and peptide YY. This is Neuropeptide Y receptor type 2 (NPY2R) from Bos taurus (Bovine).